A 762-amino-acid polypeptide reads, in one-letter code: Endonuclease MutS2 (762 aa).

An ATP-binding site is contributed by 329–336; sequence GPNTGGKT. The Smr domain occupies 682 to 757; that stretch reads LNLIGKDVET…GSGVTVVYLE (76 aa).

This sequence belongs to the DNA mismatch repair MutS family. MutS2 subfamily. Homodimer. Binds to stalled ribosomes, contacting rRNA.

In terms of biological role, endonuclease that is involved in the suppression of homologous recombination and thus may have a key role in the control of bacterial genetic diversity. Acts as a ribosome collision sensor, splitting the ribosome into its 2 subunits. Detects stalled/collided 70S ribosomes which it binds and splits by an ATP-hydrolysis driven conformational change. Acts upstream of the ribosome quality control system (RQC), a ribosome-associated complex that mediates the extraction of incompletely synthesized nascent chains from stalled ribosomes and their subsequent degradation. Probably generates substrates for RQC. The polypeptide is Endonuclease MutS2 (Aquifex aeolicus (strain VF5)).